The following is a 522-amino-acid chain: Colicin-E1 (522 aa).

Disordered stretches follow at residues 26–52 (NGTPDGSGSGGGGGKGGSKSESSAAIH) and 136–165 (EEKARKEAEAAEKAFQEAEQRRKEIEREKA). Gly residues predominate over residues 30-42 (DGSGSGGGGGKGG). The next 2 membrane-spanning stretches (helical) occupy residues 471-487 (AADAGVSYVVALLFSLL) and 494-510 (IWGIAIVTGILCSYIDK).

This sequence belongs to the channel forming colicin family.

It localises to the cell membrane. This colicin is a channel-forming colicin. This class of transmembrane toxins depolarize the cytoplasmic membrane, leading to dissipation of cellular energy. Its function is as follows. Colicins are polypeptide toxins produced by and active against E.coli and closely related bacteria. The polypeptide is Colicin-E1 (cea) (Escherichia coli).